The primary structure comprises 349 residues: Putative transport protein YhhT (349 aa).

Over methionine 1–glycine 10 the chain is Cytoplasmic. The helical transmembrane segment at methionine 11 to alanine 31 threads the bilayer. A topological domain (periplasmic) is located at residue aspartate 32. A helical membrane pass occupies residues isoleucine 33–tryptophan 53. The Cytoplasmic segment spans residues phenylalanine 54–proline 62. Residues valine 63–leucine 83 form a helical membrane-spanning segment. Topologically, residues alanine 84–threonine 142 are periplasmic. A helical membrane pass occupies residues glycine 143–phenylalanine 163. Residues glutamate 164–glycine 208 are Cytoplasmic-facing. A helical membrane pass occupies residues valine 209–leucine 229. Residues alanine 230 to asparagine 234 lie on the Periplasmic side of the membrane. The chain crosses the membrane as a helical span at residues tyrosine 235–phenylalanine 255. Residues asparagine 256 to glycine 257 lie on the Cytoplasmic side of the membrane. The chain crosses the membrane as a helical span at residues valine 258–isoleucine 278. Residues leucine 279 to threonine 292 are Periplasmic-facing. A helical transmembrane segment spans residues methionine 293–leucine 313. The Cytoplasmic portion of the chain corresponds to serine 314–glycine 349.

It belongs to the autoinducer-2 exporter (AI-2E) (TC 2.A.86) family.

The protein localises to the cell inner membrane. In Escherichia coli O157:H7, this protein is Putative transport protein YhhT (yhhT).